The sequence spans 330 residues: Tyrosine-protein phosphatase yvh1 (330 aa).

The Tyrosine-protein phosphatase domain occupies 45–187 (NDLSEISKNL…LRVYFECNYQ (143 aa)). Cys131 serves as the catalytic Phosphocysteine intermediate.

It belongs to the protein-tyrosine phosphatase family. Non-receptor class dual specificity subfamily.

It is found in the cytoplasm. The protein resides in the nucleus. The catalysed reaction is O-phospho-L-tyrosyl-[protein] + H2O = L-tyrosyl-[protein] + phosphate. In terms of biological role, may be directly involved in signal transduction and/or cell cycle regulation. It is necessary for maintaining growth rate or spore germination. Could show both activity toward tyrosine-protein phosphate as well as with serine-protein phosphate. In Schizosaccharomyces pombe (strain 972 / ATCC 24843) (Fission yeast), this protein is Tyrosine-protein phosphatase yvh1 (yvh1).